A 250-amino-acid chain; its full sequence is Triosephosphate isomerase (250 aa).

The substrate site is built by N10 and K12. Residue H94 is the Electrophile of the active site. E167 acts as the Proton acceptor in catalysis.

It belongs to the triosephosphate isomerase family. Homodimer.

The protein localises to the cytoplasm. The catalysed reaction is D-glyceraldehyde 3-phosphate = dihydroxyacetone phosphate. It functions in the pathway carbohydrate biosynthesis; gluconeogenesis. It participates in carbohydrate degradation; glycolysis; D-glyceraldehyde 3-phosphate from glycerone phosphate: step 1/1. This is Triosephosphate isomerase from Taenia solium (Pork tapeworm).